The sequence spans 153 residues: Membrane protein FAM174B (153 aa).

Positions Met-1–Ala-27 are cleaved as a signal peptide. At Arg-28 to Thr-84 the chain is on the extracellular side. A disordered region spans residues Glu-31–Ser-67. Asn-50 carries N-linked (GlcNAc...) asparagine glycosylation. The helical transmembrane segment at Leu-85–Leu-105 threads the bilayer. The Cytoplasmic segment spans residues Arg-106–Arg-153.

This sequence belongs to the FAM174 family.

It localises to the cell membrane. Its subcellular location is the golgi apparatus. In terms of biological role, essential for Golgi structural integrity. The sequence is that of Membrane protein FAM174B (Fam174b) from Mus musculus (Mouse).